The chain runs to 100 residues: Urease subunit gamma (100 aa).

The protein belongs to the urease gamma subunit family. As to quaternary structure, heterotrimer of UreA (gamma), UreB (beta) and UreC (alpha) subunits. Three heterotrimers associate to form the active enzyme.

It is found in the cytoplasm. The enzyme catalyses urea + 2 H2O + H(+) = hydrogencarbonate + 2 NH4(+). It functions in the pathway nitrogen metabolism; urea degradation; CO(2) and NH(3) from urea (urease route): step 1/1. This is Urease subunit gamma from Klebsiella pneumoniae.